Here is a 240-residue protein sequence, read N- to C-terminus: Adenylate dimethylallyltransferase (240 aa).

This sequence belongs to the isopentenyl transferase family.

It catalyses the reaction dimethylallyl diphosphate + AMP = N(6)-(dimethylallyl)adenosine 5'-phosphate + diphosphate. Its function is as follows. Transfers dimethylallyl groups to AMP as part of the biosynthesis of cytokinin phytohormones. This chain is Adenylate dimethylallyltransferase (izt), found in Agrobacterium tumefaciens (strain Ach5).